The primary structure comprises 395 residues: Chalcone synthase (395 aa).

Residue Cys169 is part of the active site.

The protein belongs to the thiolase-like superfamily. Chalcone/stilbene synthases family.

The enzyme catalyses (E)-4-coumaroyl-CoA + 3 malonyl-CoA + 3 H(+) = 2',4,4',6'-tetrahydroxychalcone + 3 CO2 + 4 CoA. It functions in the pathway secondary metabolite biosynthesis; flavonoid biosynthesis. In terms of biological role, the primary product of this enzyme is 4,2',4',6'-tetrahydroxychalcone (also termed naringenin-chalcone or chalcone) which can under specific conditions spontaneously isomerize into naringenin. The chain is Chalcone synthase (CHS) from Pinus strobus (Eastern white pine).